Consider the following 237-residue polypeptide: NAD(P)H-quinone oxidoreductase subunit K, chloroplastic (237 aa).

[4Fe-4S] cluster-binding residues include Cys55, Cys56, Cys120, and Cys151.

It belongs to the complex I 20 kDa subunit family. As to quaternary structure, NDH is composed of at least 16 different subunits, 5 of which are encoded in the nucleus. The cofactor is [4Fe-4S] cluster.

It localises to the plastid. The protein resides in the chloroplast thylakoid membrane. It carries out the reaction a plastoquinone + NADH + (n+1) H(+)(in) = a plastoquinol + NAD(+) + n H(+)(out). It catalyses the reaction a plastoquinone + NADPH + (n+1) H(+)(in) = a plastoquinol + NADP(+) + n H(+)(out). In terms of biological role, NDH shuttles electrons from NAD(P)H:plastoquinone, via FMN and iron-sulfur (Fe-S) centers, to quinones in the photosynthetic chain and possibly in a chloroplast respiratory chain. The immediate electron acceptor for the enzyme in this species is believed to be plastoquinone. Couples the redox reaction to proton translocation, and thus conserves the redox energy in a proton gradient. This chain is NAD(P)H-quinone oxidoreductase subunit K, chloroplastic, found in Nephroselmis olivacea (Green alga).